A 63-amino-acid polypeptide reads, in one-letter code: 2-hydroxymuconate tautomerase (63 aa).

Pro2 functions as the Proton acceptor; via imino nitrogen in the catalytic mechanism.

Belongs to the 4-oxalocrotonate tautomerase family. In terms of assembly, homohexamer.

It carries out the reaction (2Z,4E)-2-hydroxyhexa-2,4-dienedioate = (3E)-2-oxohex-3-enedioate. The protein operates within aromatic compound metabolism; salicylate degradation. In terms of biological role, catalyzes the ketonization of 2-hydroxymuconate stereoselectively to yield 2-oxo-3-hexenedioate. The polypeptide is 2-hydroxymuconate tautomerase (nahJ) (Pseudomonas fluorescens).